The primary structure comprises 155 residues: uncharacterized protein (155 aa).

Residues Lys-28 to Gly-38 show a composition bias toward basic and acidic residues. Residues Lys-28 to Cys-52 form a disordered region.

This is an uncharacterized protein from Dryophytes versicolor (chameleon treefrog).